The primary structure comprises 224 residues: Uracil-DNA glycosylase (224 aa).

The active-site Proton acceptor is the aspartate 64.

The protein belongs to the uracil-DNA glycosylase (UDG) superfamily. UNG family.

It is found in the cytoplasm. The catalysed reaction is Hydrolyzes single-stranded DNA or mismatched double-stranded DNA and polynucleotides, releasing free uracil.. Its function is as follows. Excises uracil residues from the DNA which can arise as a result of misincorporation of dUMP residues by DNA polymerase or due to deamination of cytosine. The chain is Uracil-DNA glycosylase from Clostridioides difficile (strain 630) (Peptoclostridium difficile).